We begin with the raw amino-acid sequence, 247 residues long: Probable transcriptional regulatory protein Syncc9605_2132 (247 aa).

The protein belongs to the TACO1 family.

The protein resides in the cytoplasm. This chain is Probable transcriptional regulatory protein Syncc9605_2132, found in Synechococcus sp. (strain CC9605).